The sequence spans 906 residues: Protein translocase subunit SecA (906 aa).

Residues Q86, 104–108 (GEGKT), and D499 each bind ATP. The segment at 863–887 (PVVSRIDPKDRNPDDPTSWGRVSRN) is disordered. Positions 890, 892, 901, and 902 each coordinate Zn(2+).

The protein belongs to the SecA family. As to quaternary structure, monomer and homodimer. Part of the essential Sec protein translocation apparatus which comprises SecA, SecYEG and auxiliary proteins SecDF-YajC and YidC. Zn(2+) is required as a cofactor.

It is found in the cell inner membrane. It localises to the cytoplasm. The catalysed reaction is ATP + H2O + cellular proteinSide 1 = ADP + phosphate + cellular proteinSide 2.. Part of the Sec protein translocase complex. Interacts with the SecYEG preprotein conducting channel. Has a central role in coupling the hydrolysis of ATP to the transfer of proteins into and across the cell membrane, serving both as a receptor for the preprotein-SecB complex and as an ATP-driven molecular motor driving the stepwise translocation of polypeptide chains across the membrane. The sequence is that of Protein translocase subunit SecA from Rickettsia rickettsii (strain Iowa).